Reading from the N-terminus, the 428-residue chain is tRNA modification GTPase MnmE (428 aa).

(6S)-5-formyl-5,6,7,8-tetrahydrofolate is bound by residues Arg-20, Glu-77, and Lys-117. Residues 213 to 351 (GFEVAIIGPP…LVQRISDVLK (139 aa)) form the TrmE-type G domain. Asn-223 provides a ligand contact to K(+). Residues 223 to 228 (NAGKST), 242 to 248 (SEVAGTT), and 267 to 270 (DTAG) contribute to the GTP site. Ser-227 contacts Mg(2+). Ser-242, Val-244, and Thr-247 together coordinate K(+). Residue Thr-248 participates in Mg(2+) binding. Lys-428 lines the (6S)-5-formyl-5,6,7,8-tetrahydrofolate pocket.

The protein belongs to the TRAFAC class TrmE-Era-EngA-EngB-Septin-like GTPase superfamily. TrmE GTPase family. Homodimer. Heterotetramer of two MnmE and two MnmG subunits. It depends on K(+) as a cofactor.

The protein resides in the cytoplasm. Functionally, exhibits a very high intrinsic GTPase hydrolysis rate. Involved in the addition of a carboxymethylaminomethyl (cmnm) group at the wobble position (U34) of certain tRNAs, forming tRNA-cmnm(5)s(2)U34. The chain is tRNA modification GTPase MnmE from Ruegeria pomeroyi (strain ATCC 700808 / DSM 15171 / DSS-3) (Silicibacter pomeroyi).